Consider the following 91-residue polypeptide: Small ribosomal subunit protein uS17 (91 aa).

It belongs to the universal ribosomal protein uS17 family. As to quaternary structure, part of the 30S ribosomal subunit.

One of the primary rRNA binding proteins, it binds specifically to the 5'-end of 16S ribosomal RNA. This chain is Small ribosomal subunit protein uS17, found in Salinispora tropica (strain ATCC BAA-916 / DSM 44818 / JCM 13857 / NBRC 105044 / CNB-440).